Here is a 299-residue protein sequence, read N- to C-terminus: Very long chain fatty acid elongase 5 (299 aa).

An N-acetylmethionine modification is found at Met1. 6 consecutive transmembrane segments (helical) span residues 26 to 46 (WFLL…LLIV), 64 to 84 (ILVV…CELV), 112 to 132 (VLRW…FFIL), 150 to 170 (MLNI…YFGA), 205 to 225 (GQLL…IWPC), and 226 to 246 (TFPL…IALF). Residues 275–299 (AAVNGHTNSFSPLENNVKPRKLRKD) form a disordered region. Positions 279–288 (GHTNSFSPLE) are enriched in polar residues. Position 285 is a phosphoserine (Ser285).

This sequence belongs to the ELO family. ELOVL5 subfamily. In terms of assembly, interacts with TECR.

Its subcellular location is the endoplasmic reticulum membrane. The protein localises to the cell projection. The protein resides in the dendrite. It catalyses the reaction a very-long-chain acyl-CoA + malonyl-CoA + H(+) = a very-long-chain 3-oxoacyl-CoA + CO2 + CoA. The catalysed reaction is (6Z,9Z,12Z)-octadecatrienoyl-CoA + malonyl-CoA + H(+) = (8Z,11Z,14Z)-3-oxoeicosatrienoyl-CoA + CO2 + CoA. It carries out the reaction (9Z,12Z,15Z)-octadecatrienoyl-CoA + malonyl-CoA + H(+) = (11Z,14Z,17Z)-3-oxoeicosatrienoyl-CoA + CO2 + CoA. The enzyme catalyses (9Z)-hexadecenoyl-CoA + malonyl-CoA + H(+) = 3-oxo-(11Z)-octadecenoyl-CoA + CO2 + CoA. It catalyses the reaction (9Z)-octadecenoyl-CoA + malonyl-CoA + H(+) = 3-oxo-(11Z)-eicosenoyl-CoA + CO2 + CoA. The catalysed reaction is (11Z)-octadecenoyl-CoA + malonyl-CoA + H(+) = 3-oxo-(13Z)-eicosenoyl-CoA + CO2 + CoA. It carries out the reaction (9Z,12Z)-octadecadienoyl-CoA + malonyl-CoA + H(+) = (11Z,14Z)-3-oxoicosa-11,14-dienoyl-CoA + CO2 + CoA. The enzyme catalyses (6Z,9Z,12Z,15Z)-octadecatetraenoyl-CoA + malonyl-CoA + H(+) = (8Z,11Z,14Z,17Z)-3-oxoicosatetraenoyl-CoA + CO2 + CoA. It catalyses the reaction (5Z,8Z,11Z,14Z)-eicosatetraenoyl-CoA + malonyl-CoA + H(+) = (7Z,10Z,13Z,16Z)-3-oxodocosatetraenoyl-CoA + CO2 + CoA. The catalysed reaction is (5Z,8Z,11Z,14Z,17Z)-eicosapentaenoyl-CoA + malonyl-CoA + H(+) = 3-oxo-(7Z,10Z,13Z,16Z,19Z)-docosapentaenoyl-CoA + CO2 + CoA. It functions in the pathway lipid metabolism; polyunsaturated fatty acid biosynthesis. Its function is as follows. Catalyzes the first and rate-limiting reaction of the four reactions that constitute the long-chain fatty acids elongation cycle. This endoplasmic reticulum-bound enzymatic process allows the addition of 2 carbons to the chain of long- and very long-chain fatty acids (VLCFAs) per cycle. Condensing enzyme that acts specifically toward polyunsaturated acyl-CoA with the higher activity toward C18:3(n-6) acyl-CoA. May participate in the production of monounsaturated and of polyunsaturated VLCFAs of different chain lengths that are involved in multiple biological processes as precursors of membrane lipids and lipid mediators. In conditions where the essential linoleic and alpha linoleic fatty acids are lacking it is also involved in the synthesis of Mead acid from oleic acid. The sequence is that of Very long chain fatty acid elongase 5 from Macaca fascicularis (Crab-eating macaque).